The following is a 176-amino-acid chain: Large ribosomal subunit protein uL6 (176 aa).

It belongs to the universal ribosomal protein uL6 family. In terms of assembly, part of the 50S ribosomal subunit.

In terms of biological role, this protein binds to the 23S rRNA, and is important in its secondary structure. It is located near the subunit interface in the base of the L7/L12 stalk, and near the tRNA binding site of the peptidyltransferase center. In Methanospirillum hungatei JF-1 (strain ATCC 27890 / DSM 864 / NBRC 100397 / JF-1), this protein is Large ribosomal subunit protein uL6.